The sequence spans 329 residues: Indolepyruvate C-methyltransferase (329 aa).

Belongs to the methyltransferase superfamily.

The catalysed reaction is indole-3-pyruvate + S-adenosyl-L-methionine = (R)-3-(indol-3-yl)-2-oxobutanoate + S-adenosyl-L-homocysteine + H(+). Strongly inhibited by the thiol reagents p-chloromercuribenzoate and N-ethylmaleimide. Partially inhibited by o-phenanthroline and 2,2'-dipyridyl. Competitively inhibited by L-tryptophan and indolmycin. Its function is as follows. Involved in the biosynthesis of the antibiotic indolmycin, an inhibitor of the bacterial tryptophan-tRNA synthetases. Catalyzes the transfer of a methyl group from S-adenosyl-L-methionine to position 3 of the aliphatic side chain of (indol-3-yl)pyruvate to yield 3-methylindolepyruvate. In Streptomyces griseus, this protein is Indolepyruvate C-methyltransferase.